The sequence spans 172 residues: RNA pyrophosphohydrolase (172 aa).

The region spanning 6–149 is the Nudix hydrolase domain; that stretch reads GYRLNVGIVI…KRDVYRRAMK (144 aa). The short motif at 38–59 is the Nudix box element; the sequence is GGIDDGESPEQAMFRELYEEVG.

The protein belongs to the Nudix hydrolase family. RppH subfamily. It depends on a divalent metal cation as a cofactor.

Functionally, accelerates the degradation of transcripts by removing pyrophosphate from the 5'-end of triphosphorylated RNA, leading to a more labile monophosphorylated state that can stimulate subsequent ribonuclease cleavage. The sequence is that of RNA pyrophosphohydrolase from Vibrio cholerae serotype O1 (strain ATCC 39315 / El Tor Inaba N16961).